Here is a 1087-residue protein sequence, read N- to C-terminus: Platelet-derived growth factor receptor alpha (1087 aa).

The first 23 residues, 1-23, serve as a signal peptide directing secretion; it reads MGTPPRTFLILGCFLTGPLLTLC. Over 24–528 the chain is Extracellular; that stretch reads QLPLPTIVPN…PTLRSELTVA (505 aa). Ig-like C2-type domains follow at residues 26-104, 116-208, 213-312, 314-411, and 414-517; these read PLPT…YNHT, IYIY…IYIL, QLPV…VHDK, FIHL…SLLI, and PALI…LKLV. Residues Asn-44, Asn-75, Asn-88, and Asn-102 are each glycosylated (N-linked (GlcNAc...) asparagine). The cysteines at positions 49 and 99 are disulfide-linked. 2 cysteine pairs are disulfide-bonded: Cys-149-Cys-189 and Cys-235-Cys-290. N-linked (GlcNAc...) asparagine glycans are attached at residues Asn-353, Asn-359, Asn-458, and Asn-468. Cysteines 435 and 501 form a disulfide. Residues 529 to 549 form a helical membrane-spanning segment; the sequence is AAVLVLLVIVIISLIVLVIIW. Over 550–1087 the chain is Cytoplasmic; it reads KQKPRYEIRW…SSDLVEDSFL (538 aa). Residues Tyr-572 and Tyr-574 each carry the phosphotyrosine; by autocatalysis modification. The Protein kinase domain occupies 593-954; that stretch reads LVLGRILGSG…HLSEIVESLL (362 aa). ATP contacts are provided by residues 599 to 607 and Lys-627; that span reads LGSGAFGKV. Residues Tyr-720, Tyr-731, Tyr-742, Tyr-754, Tyr-762, and Tyr-768 each carry the phosphotyrosine; by autocatalysis modification. The active-site Proton acceptor is the Asp-818. 2 positions are modified to phosphotyrosine; by autocatalysis: Tyr-849 and Tyr-988. Over residues 1000–1011 the composition is skewed to basic and acidic residues; the sequence is KDRESGFDEQRL. Residues 1000–1059 form a disordered region; that stretch reads KDRESGFDEQRLSADSGYITPLPDIDPVSEDELGKRNRHSSQTSEESAIETGSSSSTFIK. Tyr-1017 is subject to Phosphotyrosine; by autocatalysis. Polar residues predominate over residues 1039 to 1057; sequence SSQTSEESAIETGSSSSTF.

It belongs to the protein kinase superfamily. Tyr protein kinase family. CSF-1/PDGF receptor subfamily. As to quaternary structure, interacts with homodimeric PDGFA, PDGFB and PDGFC, and with heterodimers formed by PDGFA and PDGFB. Monomer in the absence of bound ligand. Interaction with dimeric PDGFA, PDGFB and/or PDGFC leads to receptor dimerization, where both PDGFRA homodimers and heterodimers with PDGFRB are observed. Ubiquitinated, leading to its internalization and degradation. Post-translationally, autophosphorylated on tyrosine residues upon ligand binding. Autophosphorylation occurs in trans, i.e. one subunit of the dimeric receptor phosphorylates tyrosine residues on the other subunit.

It is found in the cell membrane. The protein resides in the cell projection. The protein localises to the cilium. It localises to the golgi apparatus. It carries out the reaction L-tyrosyl-[protein] + ATP = O-phospho-L-tyrosyl-[protein] + ADP + H(+). Its activity is regulated as follows. Present in an inactive conformation in the absence of bound ligand. Binding of PDGFA and/or PDGFB leads to dimerization and activation by autophosphorylation on tyrosine residues. Tyrosine-protein kinase that acts as a cell-surface receptor for PDGFA, PDGFB and PDGFC and plays an essential role in the regulation of embryonic development, cell proliferation, survival and chemotaxis. Depending on the context, promotes or inhibits cell proliferation and cell migration. Plays an important role in the differentiation of bone marrow-derived mesenchymal stem cells. Required for normal skeleton development. Required for normal development of the gastrointestinal tract. Plays a role in cell migration and chemotaxis in wound healing. Plays a role in platelet activation, secretion of agonists from platelet granules, and in thrombin-induced platelet aggregation. Binding of its cognate ligands - homodimeric PDGFA, homodimeric PDGFB, heterodimers formed by PDGFA and PDGFB or homodimeric PDGFC -leads to the activation of several signaling cascades; the response depends on the nature of the bound ligand and is modulated by the formation of heterodimers between PDGFRA and PDGFRB. Phosphorylates PIK3R1, PLCG1, and PTPN11. Activation of PLCG1 leads to the production of the cellular signaling molecules diacylglycerol and inositol 1,4,5-trisphosphate, mobilization of cytosolic Ca(2+) and the activation of protein kinase C. Phosphorylates PIK3R1, the regulatory subunit of phosphatidylinositol 3-kinase, and thereby mediates activation of the AKT1 signaling pathway. Mediates activation of HRAS and of the MAP kinases MAPK1/ERK2 and/or MAPK3/ERK1. Promotes activation of STAT family members STAT1, STAT3 and STAT5A and/or STAT5B. Receptor signaling is down-regulated by protein phosphatases that dephosphorylate the receptor and its down-stream effectors, and by rapid internalization of the activated receptor. The sequence is that of Platelet-derived growth factor receptor alpha (PDGFRA) from Gallus gallus (Chicken).